Consider the following 259-residue polypeptide: 3-dehydroquinate dehydratase (259 aa).

3-dehydroquinate is bound by residues 50-52 and R86; that span reads EWR. H147 serves as the catalytic Proton donor/acceptor. Residue K174 is the Schiff-base intermediate with substrate of the active site. 3-dehydroquinate-binding residues include R216, S235, and Q239.

It belongs to the type-I 3-dehydroquinase family. As to quaternary structure, homodimer.

The catalysed reaction is 3-dehydroquinate = 3-dehydroshikimate + H2O. Its pathway is metabolic intermediate biosynthesis; chorismate biosynthesis; chorismate from D-erythrose 4-phosphate and phosphoenolpyruvate: step 3/7. Its function is as follows. Involved in the third step of the chorismate pathway, which leads to the biosynthesis of aromatic amino acids. Catalyzes the cis-dehydration of 3-dehydroquinate (DHQ) and introduces the first double bond of the aromatic ring to yield 3-dehydroshikimate. The sequence is that of 3-dehydroquinate dehydratase from Geobacillus sp. (strain WCH70).